The sequence spans 209 residues: Large ribosomal subunit protein uL4 (209 aa).

Residues 46–71 (GTSSTKTRSEVRGSSKKPWKQKGTGR) form a disordered region. A compositionally biased stretch (basic residues) spans 59–71 (SSKKPWKQKGTGR).

This sequence belongs to the universal ribosomal protein uL4 family. Part of the 50S ribosomal subunit.

In terms of biological role, one of the primary rRNA binding proteins, this protein initially binds near the 5'-end of the 23S rRNA. It is important during the early stages of 50S assembly. It makes multiple contacts with different domains of the 23S rRNA in the assembled 50S subunit and ribosome. Forms part of the polypeptide exit tunnel. The sequence is that of Large ribosomal subunit protein uL4 from Borrelia garinii subsp. bavariensis (strain ATCC BAA-2496 / DSM 23469 / PBi) (Borreliella bavariensis).